Reading from the N-terminus, the 210-residue chain is T-cell surface glycoprotein CD8 beta chain (210 aa).

An N-terminal signal peptide occupies residues 1 to 21 (MRPRLWLLLAAQLAVLHGSSV). Residues 22–132 (LQQTPAYIKV…ELTFGKGTQL (111 aa)) enclose the Ig-like V-type domain. Topologically, residues 22–170 (LQQTPAYIKV…ETQKGPLCSP (149 aa)) are extracellular. Cys41 and Cys116 form a disulfide bridge. A glycan (N-linked (GlcNAc...) asparagine) is linked at Asn102. The helical transmembrane segment at 171–191 (ITLGLLVAGVLVLLVSLGVAI) threads the bilayer. Topologically, residues 192 to 210 (HLCCRRRRARLRFMKQFYK) are cytoplasmic.

As to quaternary structure, forms disulfide-linked heterodimers with CD8A at the cell surface. Interacts with CD3D; this interaction couples TCR-CD3 with CD8. Interacts with LCK. Post-translationally, phosphorylated as a consequence of T-cell activation. Palmitoylated at the cytoplasmic tail and thereby targets the heterodimer CD8A/CD8B to lipid rafts unlike CD8A homodimers.

It is found in the cell membrane. In terms of biological role, integral membrane glycoprotein that plays an essential role in the immune response and serves multiple functions in responses against both external and internal offenses. In T-cells, functions primarily as a coreceptor for MHC class I molecule:peptide complex. The antigens presented by class I peptides are derived from cytosolic proteins while class II derived from extracellular proteins. Interacts simultaneously with the T-cell receptor (TCR) and the MHC class I proteins presented by antigen presenting cells (APCs). In turn, recruits the Src kinase LCK to the vicinity of the TCR-CD3 complex. A palmitoylation site in the cytoplasmic tail of CD8B chain contributes to partitioning of CD8 into the plasma membrane lipid rafts where signaling proteins are enriched. Once LCK recruited, it initiates different intracellular signaling pathways by phosphorylating various substrates ultimately leading to lymphokine production, motility, adhesion and activation of cytotoxic T-lymphocytes (CTLs). Additionally, plays a critical role in thymic selection of CD8+ T-cells. This is T-cell surface glycoprotein CD8 beta chain (CD8B) from Pongo pygmaeus (Bornean orangutan).